The sequence spans 284 residues: Pantothenate synthetase (284 aa).

Residue 30–37 (MGYLHEGH) coordinates ATP. Histidine 37 serves as the catalytic Proton donor. Glutamine 61 is a binding site for (R)-pantoate. Glutamine 61 provides a ligand contact to beta-alanine. 147 to 150 (GQKD) is an ATP binding site. Position 153 (glutamine 153) interacts with (R)-pantoate. ATP contacts are provided by residues valine 176 and 184–187 (KSSR).

This sequence belongs to the pantothenate synthetase family. In terms of assembly, homodimer.

It is found in the cytoplasm. It catalyses the reaction (R)-pantoate + beta-alanine + ATP = (R)-pantothenate + AMP + diphosphate + H(+). It functions in the pathway cofactor biosynthesis; (R)-pantothenate biosynthesis; (R)-pantothenate from (R)-pantoate and beta-alanine: step 1/1. In terms of biological role, catalyzes the condensation of pantoate with beta-alanine in an ATP-dependent reaction via a pantoyl-adenylate intermediate. This chain is Pantothenate synthetase, found in Lysinibacillus sphaericus (strain C3-41).